The primary structure comprises 100 residues: Small ribosomal subunit protein uS14c (100 aa).

It belongs to the universal ribosomal protein uS14 family. Part of the 30S ribosomal subunit.

It is found in the plastid. The protein resides in the chloroplast. In terms of biological role, binds 16S rRNA, required for the assembly of 30S particles. In Adiantum capillus-veneris (Maidenhair fern), this protein is Small ribosomal subunit protein uS14c.